Here is a 75-residue protein sequence, read N- to C-terminus: uncharacterized protein (75 aa).

This is an uncharacterized protein from Halalkalibacterium halodurans (strain ATCC BAA-125 / DSM 18197 / FERM 7344 / JCM 9153 / C-125) (Bacillus halodurans).